A 341-amino-acid chain; its full sequence is GTP-binding protein GTR2 (341 aa).

S23, S24, S43, H124, and D127 together coordinate GTP.

This sequence belongs to the GTR/RAG GTP-binding protein family. In terms of assembly, heterodimer; with GTR1. Component of the GSE complex composed of GTR1, GTR2, SLM4, MEH1 and LTV1. Component of the EGO complex, at least composed of GTR2, SLM4 and MEH1. Interacts with GTR1; the interaction is direct.

It localises to the vacuole membrane. It carries out the reaction GTP + H2O = GDP + phosphate + H(+). Its function is as follows. GTPase involved in activation of the TORC1 signaling pathway, which promotes growth and represses autophagy in nutrient-rich conditions. Also required for TORC1 inactivation during nitrogen starvation. Required for intracellular sorting of GAP1 out of the endosome. Involved in the regulation of microautophagy. The protein is GTP-binding protein GTR2 of Saccharomyces cerevisiae (strain ATCC 204508 / S288c) (Baker's yeast).